The primary structure comprises 250 residues: 5-oxoprolinase subunit A (250 aa).

This sequence belongs to the LamB/PxpA family. Forms a complex composed of PxpA, PxpB and PxpC.

The enzyme catalyses 5-oxo-L-proline + ATP + 2 H2O = L-glutamate + ADP + phosphate + H(+). Catalyzes the cleavage of 5-oxoproline to form L-glutamate coupled to the hydrolysis of ATP to ADP and inorganic phosphate. The protein is 5-oxoprolinase subunit A of Streptomyces griseus subsp. griseus (strain JCM 4626 / CBS 651.72 / NBRC 13350 / KCC S-0626 / ISP 5235).